The sequence spans 580 residues: TRAF-type zinc finger domain-containing protein 1 (580 aa).

Alanine 2 bears the N-acetylalanine mark. The TRAF-type zinc-finger motif lies at 27–103 (IHEIHCQRNI…DLELSVLKLK (77 aa)). Position 190 is a phosphoserine (serine 190). Residues 197 to 209 (TTNQRSMTAQFPI) are compositionally biased toward polar residues. The disordered stretch occupies residues 197 to 236 (TTNQRSMTAQFPIQNNLLEEQERQERNRSRQTPKERGEDS). Residues 216-235 (EQERQERNRSRQTPKERGED) show a composition bias toward basic and acidic residues. Phosphoserine is present on residues serine 326, serine 414, and serine 429. Residues 392–580 (PATANNHVSE…GAGDAEEEEE (189 aa)) are disordered. Residues 409-419 (QPRETSPELPK) show a composition bias toward basic and acidic residues. Residues 453–463 (PPNNTTAPPNR) are compositionally biased toward low complexity. Serine 469 bears the Phosphoserine mark.

Interacts with MAVS, TICAM1, TRAF1, TRAF2, TRAF3 and TRAF6.

In terms of biological role, negative feedback regulator that controls excessive innate immune responses. Regulates both Toll-like receptor 4 (TLR4) and DDX58/RIG1-like helicases (RLH) pathways. May inhibit the LTR pathway by direct interaction with TRAF6 and attenuation of NF-kappa-B activation. May negatively regulate the RLH pathway downstream from MAVS and upstream of NF-kappa-B and IRF3. This Bos taurus (Bovine) protein is TRAF-type zinc finger domain-containing protein 1 (TRAFD1).